A 210-amino-acid chain; its full sequence is Nucleoside triphosphate pyrophosphatase (210 aa).

The active-site Proton acceptor is the aspartate 79.

Belongs to the Maf family. A divalent metal cation serves as cofactor.

It localises to the cytoplasm. The enzyme catalyses a ribonucleoside 5'-triphosphate + H2O = a ribonucleoside 5'-phosphate + diphosphate + H(+). It catalyses the reaction a 2'-deoxyribonucleoside 5'-triphosphate + H2O = a 2'-deoxyribonucleoside 5'-phosphate + diphosphate + H(+). Nucleoside triphosphate pyrophosphatase. May have a dual role in cell division arrest and in preventing the incorporation of modified nucleotides into cellular nucleic acids. The sequence is that of Nucleoside triphosphate pyrophosphatase from Mycolicibacterium paratuberculosis (strain ATCC BAA-968 / K-10) (Mycobacterium paratuberculosis).